A 784-amino-acid chain; its full sequence is LPS-assembly protein LptD (784 aa).

The first 24 residues, 1 to 24, serve as a signal peptide directing secretion; it reads MKKRIPTLLATMIATALYSQQGLA. 2 disulfides stabilise this stretch: Cys-31–Cys-724 and Cys-173–Cys-725.

This sequence belongs to the LptD family. As to quaternary structure, component of the lipopolysaccharide transport and assembly complex. Interacts with LptE and LptA. Post-translationally, contains two intramolecular disulfide bonds.

It localises to the cell outer membrane. Its function is as follows. Together with LptE, is involved in the assembly of lipopolysaccharide (LPS) at the surface of the outer membrane. In Escherichia coli O6:K15:H31 (strain 536 / UPEC), this protein is LPS-assembly protein LptD.